Consider the following 326-residue polypeptide: MKKIVVIPGDGIGKEVMEAAMLILEKLDLPFEYSYYDAGDEALEKYGKALPDETLEACRKSDAVLFGAAGETAADVIVRLRRELGTFANVRPAKAIEGIECLYPGLDIVVVRENTECLYMGFEFGFGDVTEAIRVITREASERIARYAFELAKREGRKKVTALHKANVMKKTCGLFRDVCREVAKDYPEIQYNDYYIDAACMYLVMDPFRFDVIVTTNMFGDIVSDLAAGLVGGLGLAPSANVGERTAIFEPVHGAAFDIAGKGIANPTAMILTACMMLRHFGYVEEAKKVEEAVEKTIKEGKKTPDLGGNLKTMEFANEVASLLD.

Positions 81, 91, 112, and 198 each coordinate substrate. Mg(2+) contacts are provided by Asp198, Asp222, and Asp226. 255-267 provides a ligand contact to NAD(+); that stretch reads GAAFDIAGKGIAN.

It belongs to the isocitrate and isopropylmalate dehydrogenases family. As to quaternary structure, homotetramer. The cofactor is Mg(2+). Requires Mn(2+) as cofactor.

It is found in the cytoplasm. The catalysed reaction is (2R,3S)-3-isopropylmalate + NAD(+) = 4-methyl-2-oxopentanoate + CO2 + NADH. Its pathway is amino-acid biosynthesis; L-leucine biosynthesis; L-leucine from 3-methyl-2-oxobutanoate: step 3/4. Functionally, catalyzes the oxidation of 3-carboxy-2-hydroxy-4-methylpentanoate (3-isopropylmalate) to 3-carboxy-4-methyl-2-oxopentanoate. The product decarboxylates to 4-methyl-2 oxopentanoate. The chain is 3-isopropylmalate dehydrogenase (leuB) from Archaeoglobus fulgidus (strain ATCC 49558 / DSM 4304 / JCM 9628 / NBRC 100126 / VC-16).